Reading from the N-terminus, the 146-residue chain is uncharacterized protein (146 aa).

Positions 67–93 (DDNGMESGFCSGATSTGQSASTSPAPV) are disordered. A compositionally biased stretch (low complexity) spans 77–92 (SGATSTGQSASTSPAP).

This is an uncharacterized protein from Caenorhabditis elegans.